The chain runs to 332 residues: Adenosine deaminase (332 aa).

Zn(2+)-binding residues include histidine 12 and histidine 14. Substrate contacts are provided by histidine 14, aspartate 16, and glycine 170. Residue histidine 197 participates in Zn(2+) binding. Glutamate 200 acts as the Proton donor in catalysis. Residue aspartate 278 coordinates Zn(2+). Aspartate 279 serves as a coordination point for substrate.

Belongs to the metallo-dependent hydrolases superfamily. Adenosine and AMP deaminases family. Adenosine deaminase subfamily. Zn(2+) is required as a cofactor.

It catalyses the reaction adenosine + H2O + H(+) = inosine + NH4(+). The catalysed reaction is 2'-deoxyadenosine + H2O + H(+) = 2'-deoxyinosine + NH4(+). Its function is as follows. Catalyzes the hydrolytic deamination of adenosine and 2-deoxyadenosine. This chain is Adenosine deaminase, found in Yersinia enterocolitica serotype O:8 / biotype 1B (strain NCTC 13174 / 8081).